The sequence spans 109 residues: Guanylin (109 aa).

Positions 1–21 are cleaved as a signal peptide; the sequence is MNTFLFPTLCLLGVWAALAGG. Positions 22–94 are excised as a propeptide; sequence VTVKDGEFSF…LERLETIAQD (73 aa). 3 disulfides stabilise this stretch: Cys63–Cys76, Cys98–Cys106, and Cys101–Cys109.

The protein belongs to the guanylin family.

The protein localises to the secreted. Functionally, endogenous activator of intestinal guanylate cyclase. It stimulates this enzyme through the same receptor binding region as the heat-stable enterotoxins. The protein is Guanylin (GUCA2A) of Sus scrofa (Pig).